Reading from the N-terminus, the 452-residue chain is Tol-Pal system protein TolB (452 aa).

The first 31 residues, 1 to 31 (MCGVRRGMGVLLLFCAVALCAMPFVVRSVWG), serve as a signal peptide directing secretion.

This sequence belongs to the TolB family. As to quaternary structure, the Tol-Pal system is composed of five core proteins: the inner membrane proteins TolA, TolQ and TolR, the periplasmic protein TolB and the outer membrane protein Pal. They form a network linking the inner and outer membranes and the peptidoglycan layer.

It localises to the periplasm. In terms of biological role, part of the Tol-Pal system, which plays a role in outer membrane invagination during cell division and is important for maintaining outer membrane integrity. This is Tol-Pal system protein TolB from Syntrophus aciditrophicus (strain SB).